A 424-amino-acid polypeptide reads, in one-letter code: Glutamate-1-semialdehyde 2,1-aminomutase (424 aa).

The residue at position 263 (Lys-263) is an N6-(pyridoxal phosphate)lysine.

The protein belongs to the class-III pyridoxal-phosphate-dependent aminotransferase family. HemL subfamily. Homodimer. Requires pyridoxal 5'-phosphate as cofactor.

Its subcellular location is the cytoplasm. It carries out the reaction (S)-4-amino-5-oxopentanoate = 5-aminolevulinate. It participates in porphyrin-containing compound metabolism; protoporphyrin-IX biosynthesis; 5-aminolevulinate from L-glutamyl-tRNA(Glu): step 2/2. The protein is Glutamate-1-semialdehyde 2,1-aminomutase of Campylobacter jejuni subsp. jejuni serotype O:2 (strain ATCC 700819 / NCTC 11168).